We begin with the raw amino-acid sequence, 491 residues long: NADH-ubiquinone oxidoreductase chain 4 (491 aa).

Helical transmembrane passes span 2–22 (IFHK…IINV), 37–57 (ALEW…AFDM), 89–109 (ISLF…LISW), 114–134 (FLLK…MGVF), 139–159 (LLLF…LIGV), 169–189 (ASYY…LGIF), 215–235 (WIFA…PFHI), 245–265 (PVSG…YGFL), 271–291 (ILPA…VIAI), 308–328 (IAYS…THTI), 332–352 (VAAV…FIAV), 372–392 (FSMP…MAIP), 412–432 (IVIG…SLYL), and 457–477 (IAIS…SLII).

Belongs to the complex I subunit 4 family.

Its subcellular location is the mitochondrion membrane. It catalyses the reaction a ubiquinone + NADH + 5 H(+)(in) = a ubiquinol + NAD(+) + 4 H(+)(out). Its function is as follows. Core subunit of the mitochondrial membrane respiratory chain NADH dehydrogenase (Complex I) that is believed to belong to the minimal assembly required for catalysis. Complex I functions in the transfer of electrons from NADH to the respiratory chain. The immediate electron acceptor for the enzyme is believed to be ubiquinone. The sequence is that of NADH-ubiquinone oxidoreductase chain 4 (ND4) from Metridium senile (Brown sea anemone).